A 324-amino-acid chain; its full sequence is CIMIP2 protein GA14893 (324 aa).

The protein belongs to the CIMIP2 family.

It localises to the cytoplasm. It is found in the cytoskeleton. The protein resides in the cilium axoneme. Its function is as follows. Probable microtubule inner protein (MIP) part of the dynein-decorated doublet microtubules (DMTs) in cilium axoneme. This chain is CIMIP2 protein GA14893, found in Drosophila pseudoobscura pseudoobscura (Fruit fly).